The chain runs to 279 residues: Tryptophan synthase alpha chain (279 aa).

Catalysis depends on proton acceptor residues E50 and D61.

It belongs to the TrpA family. Tetramer of two alpha and two beta chains.

It carries out the reaction (1S,2R)-1-C-(indol-3-yl)glycerol 3-phosphate + L-serine = D-glyceraldehyde 3-phosphate + L-tryptophan + H2O. Its pathway is amino-acid biosynthesis; L-tryptophan biosynthesis; L-tryptophan from chorismate: step 5/5. In terms of biological role, the alpha subunit is responsible for the aldol cleavage of indoleglycerol phosphate to indole and glyceraldehyde 3-phosphate. This chain is Tryptophan synthase alpha chain, found in Brucella suis biovar 1 (strain 1330).